A 99-amino-acid chain; its full sequence is Aspartyl/glutamyl-tRNA(Asn/Gln) amidotransferase subunit C (99 aa).

This sequence belongs to the GatC family. Heterotrimer of A, B and C subunits.

The enzyme catalyses L-glutamyl-tRNA(Gln) + L-glutamine + ATP + H2O = L-glutaminyl-tRNA(Gln) + L-glutamate + ADP + phosphate + H(+). It carries out the reaction L-aspartyl-tRNA(Asn) + L-glutamine + ATP + H2O = L-asparaginyl-tRNA(Asn) + L-glutamate + ADP + phosphate + 2 H(+). In terms of biological role, allows the formation of correctly charged Asn-tRNA(Asn) or Gln-tRNA(Gln) through the transamidation of misacylated Asp-tRNA(Asn) or Glu-tRNA(Gln) in organisms which lack either or both of asparaginyl-tRNA or glutaminyl-tRNA synthetases. The reaction takes place in the presence of glutamine and ATP through an activated phospho-Asp-tRNA(Asn) or phospho-Glu-tRNA(Gln). This is Aspartyl/glutamyl-tRNA(Asn/Gln) amidotransferase subunit C from Solibacter usitatus (strain Ellin6076).